A 159-amino-acid chain; its full sequence is Probable chemoreceptor glutamine deamidase CheD 2 (159 aa).

It belongs to the CheD family.

It carries out the reaction L-glutaminyl-[protein] + H2O = L-glutamyl-[protein] + NH4(+). Functionally, probably deamidates glutamine residues to glutamate on methyl-accepting chemotaxis receptors (MCPs), playing an important role in chemotaxis. In Anaeromyxobacter dehalogenans (strain 2CP-C), this protein is Probable chemoreceptor glutamine deamidase CheD 2.